Reading from the N-terminus, the 291-residue chain is HTH-type transcriptional activator AmpR (291 aa).

The HTH lysR-type domain maps to 6–63 (LPLNSLRAFEAAARHLSFTHAAIELNVTHSAISQHVKTLEQHLNCQLFVRVSRGLMLT). The H-T-H motif DNA-binding region spans 23-42 (FTHAAIELNVTHSAISQHVK).

It belongs to the LysR transcriptional regulatory family.

The protein resides in the cytoplasm. Its function is as follows. This protein is a positive regulator of gene expression of cephalosporinase (AmpC). The polypeptide is HTH-type transcriptional activator AmpR (ampR) (Enterobacter cloacae).